A 269-amino-acid polypeptide reads, in one-letter code: Phosphonoacetaldehyde hydrolase (269 aa).

The Nucleophile role is filled by Asp10. Residues Asp10 and Ala12 each coordinate Mg(2+). Lys52 functions as the Schiff-base intermediate with substrate in the catalytic mechanism. Asp186 serves as a coordination point for Mg(2+).

This sequence belongs to the HAD-like hydrolase superfamily. PhnX family. Homodimer. It depends on Mg(2+) as a cofactor.

The enzyme catalyses phosphonoacetaldehyde + H2O = acetaldehyde + phosphate + H(+). Functionally, involved in phosphonate degradation. In Klebsiella pneumoniae subsp. pneumoniae (strain ATCC 700721 / MGH 78578), this protein is Phosphonoacetaldehyde hydrolase.